The chain runs to 110 residues: Putative pterin-4-alpha-carbinolamine dehydratase (110 aa).

This sequence belongs to the pterin-4-alpha-carbinolamine dehydratase family.

It carries out the reaction (4aS,6R)-4a-hydroxy-L-erythro-5,6,7,8-tetrahydrobiopterin = (6R)-L-erythro-6,7-dihydrobiopterin + H2O. This chain is Putative pterin-4-alpha-carbinolamine dehydratase, found in Vibrio vulnificus (strain CMCP6).